Consider the following 93-residue polypeptide: DNA-directed RNA polymerase subunit Rpo11 (93 aa).

The protein belongs to the archaeal Rpo11/eukaryotic RPB11/RPC19 RNA polymerase subunit family. Part of the RNA polymerase complex.

It is found in the cytoplasm. It catalyses the reaction RNA(n) + a ribonucleoside 5'-triphosphate = RNA(n+1) + diphosphate. DNA-dependent RNA polymerase (RNAP) catalyzes the transcription of DNA into RNA using the four ribonucleoside triphosphates as substrates. The protein is DNA-directed RNA polymerase subunit Rpo11 of Sulfurisphaera tokodaii (strain DSM 16993 / JCM 10545 / NBRC 100140 / 7) (Sulfolobus tokodaii).